The sequence spans 370 residues: UDP-N-acetylglucosamine--N-acetylmuramyl-(pentapeptide) pyrophosphoryl-undecaprenol N-acetylglucosamine transferase (370 aa).

Residues Thr-10–Gly-12, Asn-124, Arg-166, Ser-198, Ile-252, and Gln-297 contribute to the UDP-N-acetyl-alpha-D-glucosamine site.

It belongs to the glycosyltransferase 28 family. MurG subfamily.

It is found in the cell membrane. The enzyme catalyses di-trans,octa-cis-undecaprenyl diphospho-N-acetyl-alpha-D-muramoyl-L-alanyl-D-glutamyl-meso-2,6-diaminopimeloyl-D-alanyl-D-alanine + UDP-N-acetyl-alpha-D-glucosamine = di-trans,octa-cis-undecaprenyl diphospho-[N-acetyl-alpha-D-glucosaminyl-(1-&gt;4)]-N-acetyl-alpha-D-muramoyl-L-alanyl-D-glutamyl-meso-2,6-diaminopimeloyl-D-alanyl-D-alanine + UDP + H(+). It functions in the pathway cell wall biogenesis; peptidoglycan biosynthesis. Its function is as follows. Cell wall formation. Catalyzes the transfer of a GlcNAc subunit on undecaprenyl-pyrophosphoryl-MurNAc-pentapeptide (lipid intermediate I) to form undecaprenyl-pyrophosphoryl-MurNAc-(pentapeptide)GlcNAc (lipid intermediate II). The polypeptide is UDP-N-acetylglucosamine--N-acetylmuramyl-(pentapeptide) pyrophosphoryl-undecaprenol N-acetylglucosamine transferase (Finegoldia magna (strain ATCC 29328 / DSM 20472 / WAL 2508) (Peptostreptococcus magnus)).